We begin with the raw amino-acid sequence, 172 residues long: Cell division protein SepF (172 aa).

The tract at residues 18 to 73 is disordered; the sequence is RRYDEEDLPDEELTTEVYSDDGYEPSSEVTQLHHHDSNEQHARGHKAVQHRRRSEL. Residues 22–40 are compositionally biased toward acidic residues; sequence EEDLPDEELTTEVYSDDGY. The segment covering 48-59 has biased composition (basic and acidic residues); that stretch reads QLHHHDSNEQHA. Residues 60–70 are compositionally biased toward basic residues; that stretch reads RGHKAVQHRRR.

It belongs to the SepF family. In terms of assembly, homodimer. Interacts with FtsZ.

It is found in the cytoplasm. Functionally, cell division protein that is part of the divisome complex and is recruited early to the Z-ring. Probably stimulates Z-ring formation, perhaps through the cross-linking of FtsZ protofilaments. Its function overlaps with FtsA. The chain is Cell division protein SepF from Cutibacterium acnes (strain DSM 16379 / KPA171202) (Propionibacterium acnes).